The following is a 421-amino-acid chain: Glutamyl-tRNA reductase (421 aa).

Residues 49-52 (TCNR), Ser109, 114-116 (EPQ), and Gln120 each bind substrate. Cys50 serves as the catalytic Nucleophile. NADP(+) is bound at residue 189-194 (GAGKMS).

This sequence belongs to the glutamyl-tRNA reductase family. As to quaternary structure, homodimer.

It catalyses the reaction (S)-4-amino-5-oxopentanoate + tRNA(Glu) + NADP(+) = L-glutamyl-tRNA(Glu) + NADPH + H(+). It functions in the pathway porphyrin-containing compound metabolism; protoporphyrin-IX biosynthesis; 5-aminolevulinate from L-glutamyl-tRNA(Glu): step 1/2. In terms of biological role, catalyzes the NADPH-dependent reduction of glutamyl-tRNA(Glu) to glutamate 1-semialdehyde (GSA). The chain is Glutamyl-tRNA reductase from Solibacter usitatus (strain Ellin6076).